Here is a 123-residue protein sequence, read N- to C-terminus: Small ribosomal subunit protein uS12 (123 aa).

At aspartate 89 the chain carries 3-methylthioaspartic acid.

It belongs to the universal ribosomal protein uS12 family. Part of the 30S ribosomal subunit. Contacts proteins S8 and S17. May interact with IF1 in the 30S initiation complex.

Functionally, with S4 and S5 plays an important role in translational accuracy. In terms of biological role, interacts with and stabilizes bases of the 16S rRNA that are involved in tRNA selection in the A site and with the mRNA backbone. Located at the interface of the 30S and 50S subunits, it traverses the body of the 30S subunit contacting proteins on the other side and probably holding the rRNA structure together. The combined cluster of proteins S8, S12 and S17 appears to hold together the shoulder and platform of the 30S subunit. The polypeptide is Small ribosomal subunit protein uS12 (Brucella anthropi (strain ATCC 49188 / DSM 6882 / CCUG 24695 / JCM 21032 / LMG 3331 / NBRC 15819 / NCTC 12168 / Alc 37) (Ochrobactrum anthropi)).